The chain runs to 423 residues: MEYLTNLKTNIMDKQLGHREVSEGSTQPKPDPSGATMKACVWDGPLNVKIAEVPKPTITHPKDVIVKTTACTICSGSDSHIFSGEMPGIEKGAILGHESCGIVAEKGDEVNNLEIGDRVVIAFDLACGQCSFCKRHEYAACDTTNDSKLMDVNYGSHHSAIFGYTKLLGDVPGCQAEYIRVPFAEINCCKLPDDIPDSEGLFMSDVLCTSLHACTLGEVKKGDTVAIWGMGPIGLYAGRWAQILGASKVIGIEVVPERIELARQKFGFTVIDRNEVSDVPKKIMELVSNGVDCAIEASGFRFSTSILHKVERAVGLETDSPDMITECLNAVRKYGHVSIIADYVGTSNQFPIGHVVMKHLTIRSGQCPCQNYFGYVIDNIRSGKIDPRWMVTNKIKFDDLPDAYNKLFYKEDGYVKVYCDMTE.

A disordered region spans residues 14-36 (KQLGHREVSEGSTQPKPDPSGAT). Zn(2+) is bound by residues Cys74, His97, Cys127, Cys130, Cys133, and Cys141.

Belongs to the zinc-containing alcohol dehydrogenase family. Class-III subfamily. Requires Zn(2+) as cofactor.

The protein localises to the golgi apparatus. The sequence is that of Zinc-type alcohol dehydrogenase-like protein C1198.01 from Schizosaccharomyces pombe (strain 972 / ATCC 24843) (Fission yeast).